Reading from the N-terminus, the 146-residue chain is 3-dehydroquinate dehydratase (146 aa).

The Proton acceptor role is filled by Tyr-24. The substrate site is built by Asn-73, His-79, and Asp-86. Catalysis depends on His-99, which acts as the Proton donor. Residues 100 to 101 and Arg-110 each bind substrate; that span reads LS.

It belongs to the type-II 3-dehydroquinase family. As to quaternary structure, homododecamer.

It carries out the reaction 3-dehydroquinate = 3-dehydroshikimate + H2O. The protein operates within metabolic intermediate biosynthesis; chorismate biosynthesis; chorismate from D-erythrose 4-phosphate and phosphoenolpyruvate: step 3/7. Functionally, catalyzes a trans-dehydration via an enolate intermediate. The protein is 3-dehydroquinate dehydratase of Shewanella baltica (strain OS223).